We begin with the raw amino-acid sequence, 433 residues long: Trigger factor (433 aa).

The PPIase FKBP-type domain maps to 165 to 250 (GDSAIIDFEG…LHNIQEKVKV (86 aa)).

The protein belongs to the FKBP-type PPIase family. Tig subfamily.

The protein localises to the cytoplasm. It catalyses the reaction [protein]-peptidylproline (omega=180) = [protein]-peptidylproline (omega=0). Its function is as follows. Involved in protein export. Acts as a chaperone by maintaining the newly synthesized protein in an open conformation. Functions as a peptidyl-prolyl cis-trans isomerase. In Sulfurimonas denitrificans (strain ATCC 33889 / DSM 1251) (Thiomicrospira denitrificans (strain ATCC 33889 / DSM 1251)), this protein is Trigger factor.